The following is a 398-amino-acid chain: Mu-type opioid receptor (398 aa).

Over 1–66 (MDSSTGPGNT…CPQTGSPSMV (66 aa)) the chain is Extracellular. 5 N-linked (GlcNAc...) asparagine glycosylation sites follow: Asn-9, Asn-31, Asn-38, Asn-46, and Asn-53. The helical transmembrane segment at 67-91 (TAITIMALYSIVCVVGLFGNFLVMY) threads the bilayer. Residues 92 to 104 (VIVRYTKMKTATN) are Cytoplasmic-facing. Residues 105 to 129 (IYIFNLALADALATSTLPFQSVNYL) form a helical membrane-spanning segment. The Extracellular portion of the chain corresponds to 130–140 (MGTWPFGTILC). Cys-140 and Cys-217 are joined by a disulfide. The chain crosses the membrane as a helical span at residues 141-163 (KIVISIDYYNMFTSIFTLCTMSV). Topologically, residues 164-183 (DRYIAVCHPVKALDFRTPRN) are cytoplasmic. Tyr-166 is subject to Phosphotyrosine. A helical transmembrane segment spans residues 184-205 (AKIVNVCNWILSSAIGLPVMFM). Topologically, residues 206–228 (ATTKYRQGSIDCTLTFSHPTWYW) are extracellular. The helical transmembrane segment at 229-253 (ENLLKICVFIFAFIMPVLIITVCYG) threads the bilayer. Residues 254–277 (LMILRLKSVRMLSGSKEKDRNLRR) are Cytoplasmic-facing. The chain crosses the membrane as a helical span at residues 278–304 (ITRMVLVVVAVFIVCWTPIHIYVIIKA). Over 305–312 (LITIPETT) the chain is Extracellular. Residues 313–336 (FQTVSWHFCIALGYTNSCLNPVLY) traverse the membrane as a helical segment. An NPxxY; plays a role in stabilizing the activated conformation of the receptor motif is present at residues 332–336 (NPVLY). Residues 337 to 398 (AFLDENFKRC…NLEAETAPLP (62 aa)) are Cytoplasmic-facing. The S-palmitoyl cysteine moiety is linked to residue Cys-351. Residues 361-385 (QNSTRVRQNTREHPSTANTVDRTNH) form a disordered region. A Phosphoserine modification is found at Ser-363. A Phosphothreonine modification is found at Thr-370. Phosphoserine is present on Ser-375. Thr-394 is subject to Phosphothreonine.

It belongs to the G-protein coupled receptor 1 family. In terms of assembly, forms homooligomers and heterooligomers with other GPCRs, such as OPRD1, OPRK1, OPRL1, NPFFR2, ADRA2A, SSTR2, CNR1 and CCR5 (probably in dimeric forms). Interacts with heterotrimeric G proteins; interaction with a heterotrimeric complex containing GNAI1, GNB1 and GNG2 stabilizes the active conformation of the receptor and increases its affinity for endomorphin-2, the synthetic opioid peptide DAMGO and for morphinan agonists. Interacts with PPL; the interaction disrupts agonist-mediated G-protein activation. Interacts (via C-terminus) with DNAJB4 (via C-terminus). Interacts with calmodulin; the interaction inhibits the constitutive activity of OPRM1; it abolishes basal and attenuates agonist-stimulated G-protein coupling. Interacts with FLNA, PLD2, RANBP9 and WLS and GPM6A. Interacts with RTP4. Interacts with SYP and GNAS. Interacts with RGS9, RGS17, RGS20, RGS4, PPP1R9B and HINT1. Post-translationally, phosphorylated. Differentially phosphorylated in basal and agonist-induced conditions. Agonist-mediated phosphorylation modulates receptor internalization. Phosphorylated by GRK2 in a agonist-dependent manner. Phosphorylation at Tyr-166 requires receptor activation, is dependent on non-receptor protein tyrosine kinase Src and results in a decrease in agonist efficacy by reducing G-protein coupling efficiency. Phosphorylated on tyrosine residues; the phosphorylation is involved in agonist-induced G-protein-independent receptor down-regulation. Phosphorylation at Ser-375 is involved in G-protein-dependent but not beta-arrestin-dependent activation of the ERK pathway. In terms of processing, ubiquitinated. A basal ubiquitination seems not to be related to degradation. Ubiquitination is increased upon formation of OPRM1:OPRD1 oligomers leading to proteasomal degradation; the ubiquitination is diminished by RTP4. Brain. Is expressed in the cerebral cortex, caudate putamen, nucleus accumbens, septal nuclei, thalamus, hippocampus, and habenula. Not detected in cerebellum.

The protein resides in the cell membrane. The protein localises to the cell projection. It localises to the axon. Its subcellular location is the perikaryon. It is found in the dendrite. The protein resides in the endosome. Functionally, receptor for endogenous opioids such as beta-endorphin and endomorphin. Receptor for natural and synthetic opioids including morphine, heroin, DAMGO, fentanyl, etorphine, buprenorphin and methadone. Also activated by enkephalin peptides, such as Met-enkephalin or Met-enkephalin-Arg-Phe, with higher affinity for Met-enkephalin-Arg-Phe. Agonist binding to the receptor induces coupling to an inactive GDP-bound heterotrimeric G-protein complex and subsequent exchange of GDP for GTP in the G-protein alpha subunit leading to dissociation of the G-protein complex with the free GTP-bound G-protein alpha and the G-protein beta-gamma dimer activating downstream cellular effectors. The agonist- and cell type-specific activity is predominantly coupled to pertussis toxin-sensitive G(i) and G(o) G alpha proteins, GNAI1, GNAI2, GNAI3 and GNAO1 isoforms Alpha-1 and Alpha-2, and to a lesser extent to pertussis toxin-insensitive G alpha proteins GNAZ and GNA15. They mediate an array of downstream cellular responses, including inhibition of adenylate cyclase activity and both N-type and L-type calcium channels, activation of inward rectifying potassium channels, mitogen-activated protein kinase (MAPK), phospholipase C (PLC), phosphoinositide/protein kinase (PKC), phosphoinositide 3-kinase (PI3K) and regulation of NF-kappa-B. Also couples to adenylate cyclase stimulatory G alpha proteins. The selective temporal coupling to G-proteins and subsequent signaling can be regulated by RGSZ proteins, such as RGS9, RGS17 and RGS4. Phosphorylation by members of the GPRK subfamily of Ser/Thr protein kinases and association with beta-arrestins is involved in short-term receptor desensitization. Beta-arrestins associate with the GPRK-phosphorylated receptor and uncouple it from the G-protein thus terminating signal transduction. The phosphorylated receptor is internalized through endocytosis via clathrin-coated pits which involves beta-arrestins. The activation of the ERK pathway occurs either in a G-protein-dependent or a beta-arrestin-dependent manner and is regulated by agonist-specific receptor phosphorylation. Acts as a class A G-protein coupled receptor (GPCR) which dissociates from beta-arrestin at or near the plasma membrane and undergoes rapid recycling. Receptor down-regulation pathways are varying with the agonist and occur dependent or independent of G-protein coupling. Endogenous ligands induce rapid desensitization, endocytosis and recycling. Heterooligomerization with other GPCRs can modulate agonist binding, signaling and trafficking properties. The sequence is that of Mu-type opioid receptor (Oprm1) from Rattus norvegicus (Rat).